A 174-amino-acid chain; its full sequence is Small ribosomal subunit protein uS4 (174 aa).

Residues 105–169 form the S4 RNA-binding domain; the sequence is RRLQTVAYRK…SPLADDLHPE (65 aa).

Belongs to the universal ribosomal protein uS4 family. In terms of assembly, part of the 30S ribosomal subunit. Contacts protein S5. The interaction surface between S4 and S5 is involved in control of translational fidelity.

In terms of biological role, one of the primary rRNA binding proteins, it binds directly to 16S rRNA where it nucleates assembly of the body of the 30S subunit. With S5 and S12 plays an important role in translational accuracy. This chain is Small ribosomal subunit protein uS4, found in Natronomonas pharaonis (strain ATCC 35678 / DSM 2160 / CIP 103997 / JCM 8858 / NBRC 14720 / NCIMB 2260 / Gabara) (Halobacterium pharaonis).